The primary structure comprises 670 residues: Probable E3 ubiquitin ligase complex SCF subunit sconB (670 aa).

The tract at residues 1–38 (MSSPPPFTSIFGGPAESAEEIDADADNSQLKPHNRSNV) is disordered. Over residues 27–38 (NSQLKPHNRSNV) the composition is skewed to polar residues. The F-box domain maps to 163–209 (IDFIAALPPEISFKILCYLDTTSLCKAAQVSRRWRALADDDVVWHRM). Residues 249 to 287 (VNGTSPKATPALPEDASPVADSSGTGKRKPEPSEEETAV) form a disordered region. 7 WD repeats span residues 339 to 376 (GHTN…EIRT), 379 to 418 (GHES…STYT), 420 to 456 (HRGG…TCLL), 458 to 499 (GHTD…RTFH), 553 to 596 (ISQS…CLRT), 599 to 636 (GHLE…CERT), and 639 to 670 (GHSG…SFQS).

The protein belongs to the WD repeat MET30/SCONB/SCON-2 family. As to quaternary structure, component of the SCF(sconB) E3 ubiquitin ligase complex.

Its pathway is protein modification; protein ubiquitination. Its function is as follows. Component of the SCF(sconB) E3 ubiquitin ligase complex involved in the regulation of sulfur metabolite repression, probably by mediating the inactivation or degradation of the metR transcription factor. The protein is Probable E3 ubiquitin ligase complex SCF subunit sconB (sconB) of Aspergillus niger (strain ATCC MYA-4892 / CBS 513.88 / FGSC A1513).